Here is a 192-residue protein sequence, read N- to C-terminus: Adenylate kinase (192 aa).

10 to 18 provides a ligand contact to ATP; that stretch reads GVPGVGGTT.

Belongs to the archaeal adenylate kinase family. In terms of assembly, monomer.

The protein localises to the cytoplasm. The enzyme catalyses AMP + ATP = 2 ADP. The protein is Adenylate kinase (adkA) of Methanothermococcus thermolithotrophicus (Methanococcus thermolithotrophicus).